A 408-amino-acid chain; its full sequence is Serine/threonine transporter SstT (408 aa).

9 helical membrane passes run 11–31, 43–63, 82–102, 141–161, 192–212, 216–236, 290–310, 316–336, and 363–383; these read LANG…VSLA, FLGS…VFIL, IVVL…LLSM, ALMT…GLAL, IGIF…AIAG, LLAV…PLIV, IPLG…VLTL, LGIQ…AISA, and VAMQ…AAET.

It belongs to the dicarboxylate/amino acid:cation symporter (DAACS) (TC 2.A.23) family.

The protein localises to the cell inner membrane. The enzyme catalyses L-serine(in) + Na(+)(in) = L-serine(out) + Na(+)(out). It catalyses the reaction L-threonine(in) + Na(+)(in) = L-threonine(out) + Na(+)(out). Functionally, involved in the import of serine and threonine into the cell, with the concomitant import of sodium (symport system). The chain is Serine/threonine transporter SstT from Shewanella sp. (strain MR-4).